A 224-amino-acid polypeptide reads, in one-letter code: Jacalin-related lectin 24 (224 aa).

Residues 8-160 form the Jacalin-type lectin domain; that stretch reads MFKVGPIGSK…LTSIGIYVYP (153 aa).

The protein belongs to the jacalin lectin family.

This chain is Jacalin-related lectin 24 (JAL24), found in Arabidopsis thaliana (Mouse-ear cress).